Here is a 259-residue protein sequence, read N- to C-terminus: Type III pantothenate kinase (259 aa).

D6 to T13 provides a ligand contact to ATP. Substrate is bound at residue G107–R110. D109 (proton acceptor) is an active-site residue. A K(+)-binding site is contributed by D129. T132 is an ATP binding site. T184 is a substrate binding site.

The protein belongs to the type III pantothenate kinase family. In terms of assembly, homodimer. It depends on NH4(+) as a cofactor. K(+) is required as a cofactor.

The protein localises to the cytoplasm. It carries out the reaction (R)-pantothenate + ATP = (R)-4'-phosphopantothenate + ADP + H(+). It functions in the pathway cofactor biosynthesis; coenzyme A biosynthesis; CoA from (R)-pantothenate: step 1/5. Its function is as follows. Catalyzes the phosphorylation of pantothenate (Pan), the first step in CoA biosynthesis. This chain is Type III pantothenate kinase, found in Listeria monocytogenes serovar 1/2a (strain ATCC BAA-679 / EGD-e).